Reading from the N-terminus, the 56-residue chain is Large ribosomal subunit protein bL32 (56 aa).

Positions 1–34 (MAVQQNKPSRSKRGMRRAHDALKTSTISVDKTSG) are disordered.

It belongs to the bacterial ribosomal protein bL32 family.

This chain is Large ribosomal subunit protein bL32, found in Baumannia cicadellinicola subsp. Homalodisca coagulata.